The chain runs to 956 residues: Translation initiation factor IF-2 (956 aa).

Disordered stretches follow at residues 53–102 (QFAG…QQEI), 116–315 (GKID…NRPA), and 334–371 (TLEK…ALDE). Basic and acidic residues predominate over residues 58 to 102 (KGNKEASKEVGEEKRKEKEALRVEREKEIEDKRRQEEERQKQQEI). The span at 142–158 (VTPTQTEKPVQKETVQS) shows a compositional bias: polar residues. Basic and acidic residues predominate over residues 166–186 (SEEKKVEKPIITEKKEVKAES). Low complexity predominate over residues 197 to 208 (TDPTTAEETITT). Residues 209 to 229 (QYQKLSGTTLTGQTIDLSQFN) show a composition bias toward polar residues. Over residues 240–257 (ITPNKPGTPGVGNNNNAN) the composition is skewed to low complexity. The segment covering 343 to 352 (GKSKAAKYRR) has biased composition (basic residues). The span at 353 to 371 (DKRETHRQKSDDEQRALDE) shows a compositional bias: basic and acidic residues. The tr-type G domain maps to 454 to 622 (TRAPIVTVMG…KVLLEAEILD (169 aa)). A G1 region spans residues 463–470 (GHVDHGKT). 463–470 (GHVDHGKT) is a binding site for GTP. The interval 488–492 (GITQH) is G2. Residues 510 to 513 (DTPG) form a G3 region. GTP is bound by residues 510 to 514 (DTPGH) and 564 to 567 (NKVD). Positions 564–567 (NKVD) are G4. The G5 stretch occupies residues 600-602 (SAK).

Belongs to the TRAFAC class translation factor GTPase superfamily. Classic translation factor GTPase family. IF-2 subfamily.

It localises to the cytoplasm. Functionally, one of the essential components for the initiation of protein synthesis. Protects formylmethionyl-tRNA from spontaneous hydrolysis and promotes its binding to the 30S ribosomal subunits. Also involved in the hydrolysis of GTP during the formation of the 70S ribosomal complex. In Flavobacterium johnsoniae (strain ATCC 17061 / DSM 2064 / JCM 8514 / BCRC 14874 / CCUG 350202 / NBRC 14942 / NCIMB 11054 / UW101) (Cytophaga johnsonae), this protein is Translation initiation factor IF-2.